The chain runs to 506 residues: Maturase K (506 aa).

Belongs to the intron maturase 2 family. MatK subfamily.

It is found in the plastid. It localises to the chloroplast. Usually encoded in the trnK tRNA gene intron. Probably assists in splicing its own and other chloroplast group II introns. This is Maturase K from Trifolium microcephalum (Small-head clover).